The primary structure comprises 351 residues: UDP-3-O-acylglucosamine N-acyltransferase (351 aa).

His-240 acts as the Proton acceptor in catalysis.

Belongs to the transferase hexapeptide repeat family. LpxD subfamily. As to quaternary structure, homotrimer.

The enzyme catalyses a UDP-3-O-[(3R)-3-hydroxyacyl]-alpha-D-glucosamine + a (3R)-hydroxyacyl-[ACP] = a UDP-2-N,3-O-bis[(3R)-3-hydroxyacyl]-alpha-D-glucosamine + holo-[ACP] + H(+). It participates in bacterial outer membrane biogenesis; LPS lipid A biosynthesis. Its function is as follows. Catalyzes the N-acylation of UDP-3-O-acylglucosamine using 3-hydroxyacyl-ACP as the acyl donor. Is involved in the biosynthesis of lipid A, a phosphorylated glycolipid that anchors the lipopolysaccharide to the outer membrane of the cell. The protein is UDP-3-O-acylglucosamine N-acyltransferase of Pseudomonas syringae pv. syringae (strain B728a).